The chain runs to 245 residues: Complement C1q subcomponent subunit C (245 aa).

An N-terminal signal peptide occupies residues 1–28 (MDVGPSSLPHLGLKLLLLLLLLPLRGQA). In terms of domain architecture, Collagen-like spans 31–112 (GCYGIPGMPG…GIPGEPGEEG (82 aa)). Proline 36, proline 39, proline 42, proline 45, proline 54, and proline 63 each carry 4-hydroxyproline. Residues 45–113 (PGKDGYDGLP…IPGEPGEEGR (69 aa)) form a disordered region. The segment covering 54-71 (PGPKGEPGIPAIPGIRGP) has biased composition (low complexity). The residue at position 75 (lysine 75) is a 5-hydroxylysine. O-linked (Gal...) hydroxylysine glycosylation occurs at lysine 75. Residues proline 81, proline 93, proline 96, proline 99, and proline 105 each carry the 4-hydroxyproline modification. The span at 90–99 (MGPPGMPGVP) shows a compositional bias: pro residues. Positions 115 to 245 (KQKFQSVFTV…VFSGFLLFPD (131 aa)) constitute a C1q domain. A disulfide bridge links cysteine 179 with cysteine 193.

As to quaternary structure, core component of the complement C1 complex, a calcium-dependent complex composed of 1 molecule of the C1Q subcomplex, 2 molecules of C1R and 2 molecules of C1S. The C1Q subcomplex is composed 18 subunits: 3 chains of C1QA, C1QB, and C1QC trimerize to form 6 collagen-like triple helices connected to six globular ligand-recognition modules (C1q domain). Post-translationally, O-linked glycans consist of Glc-Gal disaccharides bound to the oxygen atom of post-translationally added hydroxyl groups.

The protein resides in the secreted. It is found in the cell surface. Its activity is regulated as follows. The C1Q subcomplex is inhibited by sulfated molecules, such as triterpenoid sulfates, heparan sulfate, or chondroitin sulfates. Core component of the complement C1 complex, a multiprotein complex that initiates the classical pathway of the complement system, a cascade of proteins that leads to phagocytosis and breakdown of pathogens and signaling that strengthens the adaptive immune system. The classical complement pathway is initiated by the C1Q subcomplex of the C1 complex, which specifically binds IgG or IgM immunoglobulins complexed with antigens, forming antigen-antibody complexes on the surface of pathogens: C1QA, together with C1QB and C1QC, specifically recognizes and binds the Fc regions of IgG or IgM via its C1q domain. Immunoglobulin-binding activates the proenzyme C1R, which cleaves C1S, initiating the proteolytic cascade of the complement system. The C1Q subcomplex is activated by a hexamer of IgG complexed with antigens, while it is activated by a pentameric IgM. The C1Q subcomplex also recognizes and binds phosphatidylserine exposed on the surface of cells undergoing programmed cell death, possibly promoting activation of the complement system. This chain is Complement C1q subcomponent subunit C, found in Homo sapiens (Human).